A 498-amino-acid chain; its full sequence is TORTIFOLIA1-like protein 5 (498 aa).

HEAT repeat units lie at residues 56-93 (ETFSLFINCLQSTDSSAKSPVRKHCVSLLSVLSRSHGD), 97-134 (PHLSKMVSTVLRRLRDPDSSVRAACVAASVDMTTNITG), 136-173 (PFSILFGPMIETVIHDCDPNAQISAAMCLAAAVDAADE), 177-214 (EQLQKALPKIGKLLKSEGFKAKAELLGAIGTVIGAVGG), and 219-257 (KAVLDWLLPNVSEFLSSDDWRARKAAAEAMARVAMVEEE). A disordered region spans residues 296–423 (EGDSTEVSES…SSSQAKSNAE (128 aa)). The span at 300-322 (TEVSESSSSSKSASSGLSATSGK) shows a compositional bias: low complexity. The span at 343–366 (NDVEPLDRGDTPKDVEQEAVVSKE) shows a compositional bias: basic and acidic residues. A compositionally biased stretch (polar residues) spans 390 to 400 (NGSNKSQVVQS). Position 426 is a phosphoserine (serine 426).

The chain is TORTIFOLIA1-like protein 5 from Arabidopsis thaliana (Mouse-ear cress).